A 418-amino-acid chain; its full sequence is CinA-like protein (418 aa).

The protein belongs to the CinA family.

The chain is CinA-like protein from Cyanothece sp. (strain PCC 7425 / ATCC 29141).